The sequence spans 4543 residues: Low-density lipoprotein receptor-related protein 1 (4543 aa).

Positions 1-21 (MGPLLALAGCLLALLAAPAAR) are cleaved as a signal peptide. Residues 22–4419 (ALEAPKTCSP…EFIVGEQQSG (4398 aa)) are Extracellular-facing. 2 LDL-receptor class A domains span residues 27-68 (KTCS…ICPQ) and 72-112 (SRCQ…HCRE). 6 cysteine pairs are disulfide-bonded: Cys-29–Cys-42, Cys-36–Cys-55, Cys-49–Cys-66, Cys-74–Cys-87, Cys-81–Cys-100, and Cys-94–Cys-110. The EGF-like 1 domain maps to 113–151 (QLANCTALGCQHHCVPTLSGPACYCNNSFQLAEDRRSCK). N-linked (GlcNAc...) asparagine glycosylation is present at Asn-116. Disulfide bonds link Cys-117/Cys-126, Cys-122/Cys-135, Cys-137/Cys-150, Cys-156/Cys-166, Cys-162/Cys-175, and Cys-177/Cys-190. Residue Asn-138 is glycosylated (N-linked (GlcNAc...) asparagine). The EGF-like 2; calcium-binding domain occupies 152–191 (DFDECTVYGTCSQTCTNTEGSYTCSCVEGYLLQPDNRSCK). 2 N-linked (GlcNAc...) asparagine glycosylation sites follow: Asn-187 and Asn-276. 3 LDL-receptor class B repeats span residues 294–336 (GNFY…DPAM), 337–380 (GKVF…DLVS), and 381–424 (RLVY…FENY). Residue Asn-359 is glycosylated (N-linked (GlcNAc...) asparagine). The N-linked (GlcNAc...) asparagine glycan is linked to Asn-448. The EGF-like 3 domain maps to 476 to 522 (RSHACEPDQFGKPGGCSDICLLGNSHKSRTCRCRSGFSLGSDGKSCK). Disulfide bonds link Cys-480–Cys-495, Cys-491–Cys-506, and Cys-508–Cys-521. LDL-receptor class B repeat units lie at residues 573-615 (GFIY…DWMG), 616-661 (NNLY…DPLN), 662-712 (GWMY…DIPA), and 713-756 (KILY…YSSF). Residue Asn-731 is glycosylated (N-linked (GlcNAc...) asparagine). The EGF-like 4 domain maps to 801 to 841 (GSNKCRVNNGGCSSLCLATPRGRQCACAEDQILGADSVTCE). 33 disulfide bridges follow: Cys-805/Cys-816, Cys-812/Cys-825, Cys-827/Cys-840, Cys-852/Cys-864, Cys-859/Cys-877, Cys-871/Cys-888, Cys-893/Cys-905, Cys-900/Cys-918, Cys-912/Cys-929, Cys-934/Cys-946, Cys-941/Cys-959, Cys-953/Cys-969, Cys-974/Cys-987, Cys-982/Cys-1000, Cys-994/Cys-1009, Cys-1013/Cys-1025, Cys-1020/Cys-1038, Cys-1032/Cys-1049, Cys-1060/Cys-1073, Cys-1067/Cys-1086, Cys-1080/Cys-1095, Cys-1102/Cys-1116, Cys-1110/Cys-1129, Cys-1123/Cys-1138, Cys-1143/Cys-1157, Cys-1150/Cys-1170, Cys-1164/Cys-1180, Cys-1183/Cys-1194, Cys-1190/Cys-1204, Cys-1206/Cys-1219, Cys-1225/Cys-1235, Cys-1231/Cys-1244, and Cys-1246/Cys-1259. 8 LDL-receptor class A domains span residues 850–890 (PQCQ…LCHQ), 891–931 (HTCP…TCSA), 932–971 (RTCSPNQFSCASGRCIPISWTCDLDDDCGDRSDESASCAY), 972–1011 (PTCFPLTQFTCNNGRCININWRCDNDNDCGDNSDEAGCSH), 1011–1051 (HSCS…NCTN), 1058–1097 (GGCHTDEFQCRLDGLCIPMRWRCDGDTDCMDSSDEKNCEG), 1100–1140 (HVCD…NCES), and 1141–1180 (LVCKPPSHTCANNTSICLPPEKLCDGSDDCGDGSDEGELC). Positions 869, 872, 874, 876, 882, and 883 each coordinate Ca(2+). Asn-926 carries N-linked (GlcNAc...) asparagine glycosylation. Residues Trp-1030, Asp-1033, Asp-1035, Asp-1037, Asp-1043, and Glu-1044 each contribute to the Ca(2+) site. Asn-1048 is a glycosylation site (N-linked (GlcNAc...) asparagine). Trp-1078, Asp-1081, Asp-1083, Asp-1085, Asp-1091, and Glu-1092 together coordinate Ca(2+). N-linked (GlcNAc...) asparagine glycosylation is found at Asn-1152 and Asn-1153. 2 consecutive EGF-like domains span residues 1181-1220 (DQCSLNNGGCSHNCTVAPGEGIVCSCPLGMELGADNKTCQ) and 1221-1260 (IQSYCAKHLKCSQKCEQDKYNVKCSCYEGWMLEPDGESCR). N-linked (GlcNAc...) asparagine glycosylation is found at Asn-1193 and Asn-1216. Asn-1305 carries N-linked (GlcNAc...) asparagine glycosylation. LDL-receptor class B repeat units follow at residues 1307–1353 (SSLY…DWIA), 1354–1396 (GNIY…DPRY), 1397–1443 (GILF…DYLE), 1444–1488 (KRIL…YGGE), and 1489–1529 (VYWT…YHPS). A glycan (N-linked (GlcNAc...) asparagine) is linked at Asn-1509. Residues 1534-1577 (APNPCEANGGKGPCSHLCLINYNRTLSCACPHLMKLDKDNTTCY) enclose the EGF-like 7 domain. 3 disulfide bridges follow: Cys-1538–Cys-1551, Cys-1547–Cys-1561, and Cys-1563–Cys-1576. 4 N-linked (GlcNAc...) asparagine glycosylation sites follow: Asn-1556, Asn-1573, Asn-1614, and Asn-1643. LDL-receptor class B repeat units lie at residues 1625-1667 (QRIY…DWVS), 1668-1711 (RNLF…HPLH), 1712-1751 (GKLYWTDGDNISVANMDGSNRTLLFTNQRGPVGLAIDYPE), and 1752-1796 (SKLY…MGDK). Residues Asn-1721, Asn-1731, Asn-1761, and Asn-1823 are each glycosylated (N-linked (GlcNAc...) asparagine). Positions 1842-1883 (GSNPCSVNNGDCSQLCLPTSETSRSCMCTAGYSLKSGQQSCE) constitute an EGF-like 8 domain. Intrachain disulfides connect Cys-1846–Cys-1857, Cys-1853–Cys-1867, and Cys-1869–Cys-1882. A glycan (N-linked (GlcNAc...) asparagine) is linked at Asn-1929. 4 LDL-receptor class B repeats span residues 1930–1972 (DTIY…DWIA), 1973–2015 (GNIY…HPEK), 2016–2059 (GYLF…DYED), and 2060–2103 (GKLY…FEDY). Residues Asn-1991 and Asn-2044 are each glycosylated (N-linked (GlcNAc...) asparagine). N-linked (GlcNAc...) asparagine glycans are attached at residues Asn-2113 and Asn-2123. The EGF-like 9 domain maps to 2151 to 2191 (GTNVCAQNNGGCQQLCLFRGGGRRTCACAHGMLSEDGVSCR). 3 cysteine pairs are disulfide-bonded: Cys-2155-Cys-2166, Cys-2162-Cys-2176, and Cys-2178-Cys-2190. LDL-receptor class B repeat units lie at residues 2247 to 2288 (NRIF…HRGW), 2289 to 2337 (DTLY…DECQ), 2338 to 2382 (NLMF…DHRA), 2383 to 2425 (EKIY…YGDY), and 2426 to 2467 (IFWT…VAND). Asn-2466 carries N-linked (GlcNAc...) asparagine glycosylation. In terms of domain architecture, EGF-like 10 spans 2472-2512 (ELSPCRVNNGGCQDLCLLTPKGHVNCSCRGERVLQEDFTCK). 3 cysteine pairs are disulfide-bonded: Cys-2476/Cys-2487, Cys-2483/Cys-2497, and Cys-2499/Cys-2511. N-linked (GlcNAc...) asparagine glycosylation is present at Asn-2496. The N-linked (GlcNAc...) asparagine glycan is linked to Asn-2515. LDL-receptor class A domains are found at residues 2516-2557 (STCN…YCSS), 2558-2596 (RKCKKGFLHCMNGRCVASRFWCNGVDDCGDNSDEVPCNK), 2597-2635 (TSCAATEFRCRDGSCIGNSSRCNQFIDCEDASDEMNCTA), 2636-2684 (TDCS…NCPG), 2688-2730 (PKCP…RQDK), 2730-2769 (KFCYPVQFECNNHRCISKLWVCDGADDCGDGSDEDSRCRL), and 2770-2812 (TTCS…GCLY). 6 cysteine pairs are disulfide-bonded: Cys-2518–Cys-2531, Cys-2526–Cys-2544, Cys-2538–Cys-2555, Cys-2560–Cys-2572, Cys-2567–Cys-2585, and Cys-2579–Cys-2594. N-linked (GlcNAc...) asparagine glycosylation is present at Asn-2595. 15 disulfide bridges follow: Cys-2599/Cys-2611, Cys-2606/Cys-2624, Cys-2618/Cys-2633, Cys-2638/Cys-2660, Cys-2654/Cys-2673, Cys-2667/Cys-2682, Cys-2690/Cys-2702, Cys-2697/Cys-2715, Cys-2709/Cys-2724, Cys-2732/Cys-2744, Cys-2739/Cys-2757, Cys-2751/Cys-2767, Cys-2772/Cys-2785, Cys-2779/Cys-2798, and Cys-2792/Cys-2810. Asn-2614 and Asn-2632 each carry an N-linked (GlcNAc...) asparagine glycan. Residue Asn-2813 is glycosylated (N-linked (GlcNAc...) asparagine). LDL-receptor class A domains are found at residues 2814 to 2853 (NTCDEREFMCGNRQCIPKHFVCDHDDDCGDGSDESPECEY), 2854 to 2897 (PTCG…RCSS), and 2900 to 2938 (SKCNDSFFMCKNGKCIPEALLCDNNNDCADGSDELNCFI). Cystine bridges form between Cys-2816–Cys-2828, Cys-2823–Cys-2841, Cys-2835–Cys-2851, Cys-2856–Cys-2868, Cys-2863–Cys-2882, Cys-2876–Cys-2895, Cys-2902–Cys-2914, Cys-2909–Cys-2927, Cys-2921–Cys-2936, Cys-2941–Cys-2953, Cys-2949–Cys-2962, Cys-2964–Cys-2977, Cys-2983–Cys-2993, Cys-2989–Cys-3002, and Cys-3004–Cys-3018. N-linked (GlcNAc...) asparagine glycosylation occurs at Asn-2903. The EGF-like 11 domain maps to 2939–2978 (NECLNKKLSGCSQECEDLKIGYKCRCRPGFRLKDDGKTCI). In terms of domain architecture, EGF-like 12; calcium-binding spans 2979–3019 (DIDECSTTYPCSQKCINTLGSYKCLCIEGYKLKPDNPTSCK). Asn-3045 and Asn-3086 each carry an N-linked (GlcNAc...) asparagine glycan. LDL-receptor class B repeat units follow at residues 3066–3110 (QMIY…DWVG), 3111–3153 (GNLY…DVQN), 3154–3197 (GYLY…DYIN), 3198–3240 (SRIY…FEDY), and 3241–3281 (IYWT…YHPY). Asn-3176 carries N-linked (GlcNAc...) asparagine glycosylation. Asn-3261 carries an N-linked (GlcNAc...) asparagine glycan. Residues 3287–3328 (PNHPCKTNNAGCSNLCLLSPGGGHKCACPTNFYLGSDGKTCV) form the EGF-like 13 domain. 3 cysteine pairs are disulfide-bonded: Cys-3291–Cys-3302, Cys-3298–Cys-3312, and Cys-3314–Cys-3327. 11 LDL-receptor class A domains span residues 3329–3368 (SNCTASQFVCKNDKCIPFWWKCDTEDDCGDRSDEPEDCPE), 3369–3407 (FKCRPGQFQCSTGICTNPAFICDGDNDCQDNSDEANCDI), 3408–3447 (HVCLPSQFKCTNTNRCIPGIFRCNGQDNCGDGEDEKDCPE), 3448–3488 (VTCA…NCTQ), 3489–3530 (MTCG…ECDE), 3531–3569 (RTCEPYQFRCKNNRCVPGRWQCDYDNDCGDNSDEESCTP), 3570–3608 (RPCSESEFSCANGRCIAGRWKCDGDHDCADGSDEKDCIP), 3608–3646 (PRCEFDQYQCKNGHCIPMRWRCDADADCMDGTDEEDCGT), 3649–3689 (RTCP…ECLK), 3690–3730 (FQCP…DCES), and 3736–3776 (KSCS…SCSH). Residue Asn-3330 is glycosylated (N-linked (GlcNAc...) asparagine). Disulfide bonds link Cys-3331-Cys-3343, Cys-3338-Cys-3356, Cys-3350-Cys-3366, Cys-3371-Cys-3383, Cys-3378-Cys-3396, Cys-3390-Cys-3405, Cys-3410-Cys-3423, Cys-3417-Cys-3436, Cys-3430-Cys-3445, Cys-3450-Cys-3463, Cys-3457-Cys-3476, Cys-3470-Cys-3486, Cys-3491-Cys-3504, Cys-3498-Cys-3517, Cys-3511-Cys-3528, Cys-3533-Cys-3545, Cys-3540-Cys-3558, Cys-3552-Cys-3567, Cys-3572-Cys-3584, Cys-3579-Cys-3597, Cys-3591-Cys-3606, Cys-3610-Cys-3622, Cys-3617-Cys-3635, Cys-3629-Cys-3644, Cys-3658-Cys-3676, Cys-3670-Cys-3687, Cys-3692-Cys-3706, Cys-3700-Cys-3719, Cys-3713-Cys-3728, Cys-3738-Cys-3752, Cys-3747-Cys-3765, Cys-3759-Cys-3774, Cys-3783-Cys-3796, Cys-3790-Cys-3805, Cys-3807-Cys-3820, Cys-3826-Cys-3836, Cys-3832-Cys-3845, and Cys-3847-Cys-3858. N-linked (GlcNAc...) asparagine glycosylation is present at Asn-3485. An N-linked (GlcNAc...) asparagine glycan is attached at Asn-3659. 2 EGF-like domains span residues 3779–3821 (KSYD…NSCQ) and 3822–3859 (DVNECLRFGTCSQLCNNTKGSHVCSCAKNFMKTDNMCK). The N-linked (GlcNAc...) asparagine glycan is linked to Asn-3786. Residue Asn-3837 is glycosylated (N-linked (GlcNAc...) asparagine). LDL-receptor class B repeat units follow at residues 3910–3952 (NKIY…THLN), 3969–4011 (GNIY…DPLR), 4012–4055 (GTMY…DYHN), and 4056–4100 (ERLY…FEDY). The Recognition site for proteolytical processing signature appears at 3939–3942 (RNRR). A glycan (N-linked (GlcNAc...) asparagine) is linked at Asn-3952. N-linked (GlcNAc...) asparagine glycans are attached at residues Asn-4074 and Asn-4124. 7 EGF-like domains span residues 4146-4182 (VTNPCDRKKCEWLCLLSPSGPVCTCPNGKRLDNGTCV), 4195-4231 (TTDTCDLVCLNGGSCFLNARKQAKCRCQPRYNGERCQ), 4231-4267 (QINQCSDYCQNGGLCTASPSGMPTCRCPTGFTGSRCD), 4267-4303 (DQQVCTNYCHNNGSCTVNQGNQPNCRCPPTFIGDRCQ), 4303-4339 (QYQQCFNYCENNGVCQMSRDGVKQCRCPPQFEGAQCQ), 4339-4374 (QDNKCSRCQEGKCNINRQSGDVSCICPDGKIAPSCL), and 4372-4409 (SCLTCDSYCLNGGTCSISDKTQLPECLCPLEVTGMRCE). Disulfide bonds link Cys-4150–Cys-4159, Cys-4155–Cys-4168, Cys-4170–Cys-4181, Cys-4199–Cys-4209, Cys-4203–Cys-4219, Cys-4221–Cys-4230, Cys-4235–Cys-4245, Cys-4239–Cys-4255, Cys-4257–Cys-4266, Cys-4271–Cys-4281, Cys-4275–Cys-4291, Cys-4293–Cys-4302, Cys-4307–Cys-4317, Cys-4311–Cys-4327, Cys-4329–Cys-4338, Cys-4343–Cys-4351, Cys-4346–Cys-4362, Cys-4364–Cys-4373, Cys-4376–Cys-4386, Cys-4380–Cys-4397, and Cys-4399–Cys-4408. Residue Asn-4178 is glycosylated (N-linked (GlcNAc...) asparagine). An N-linked (GlcNAc...) asparagine glycan is attached at Asn-4278. The helical transmembrane segment at 4420-4443 (RTASIVIPILLLLLLLAVVAFAWY) threads the bilayer. Topologically, residues 4444–4543 (KWRIKGAKGF…ADDDLTDPLA (100 aa)) are cytoplasmic. Positions 4501–4506 (FTNPVY) match the NPXY motif motif. The tract at residues 4522–4543 (STDEKRELLARGADDDLTDPLA) is disordered. Positions 4523 to 4535 (TDEKRELLARGAD) are enriched in basic and acidic residues.

The protein belongs to the LDLR family. As to quaternary structure, binds vitellogenin and LRPAP1 (alpha 2-macroglobulin). In terms of processing, cleaved into a 85 kDa membrane-spanning subunit (LRP-85) and a 515 kDa large extracellular domain (LRP-515) that remains non-covalently associated. In terms of tissue distribution, somatic.

Its subcellular location is the membrane. It is found in the coated pit. In terms of biological role, endocytic receptor involved in endocytosis and in phagocytosis of apoptotic cells. Involved in cellular lipid homeostasis. Involved in the plasma clearance of chylomicron remnants and activated LRPAP1 (alpha 2-macroglobulin), as well as the local metabolism of complexes between plasminogen activators and their endogenous inhibitors. Acts as an alpha-2-macroglobulin receptor. In Gallus gallus (Chicken), this protein is Low-density lipoprotein receptor-related protein 1 (LRP1).